A 692-amino-acid polypeptide reads, in one-letter code: Elongation factor G (692 aa).

The region spanning 8–282 (ENTRNIGIMA…GVVDYLPSPV (275 aa)) is the tr-type G domain. GTP-binding positions include 17–24 (AHIDAGKT), 81–85 (DTPGH), and 135–138 (NKMD).

The protein belongs to the TRAFAC class translation factor GTPase superfamily. Classic translation factor GTPase family. EF-G/EF-2 subfamily.

The protein resides in the cytoplasm. Functionally, catalyzes the GTP-dependent ribosomal translocation step during translation elongation. During this step, the ribosome changes from the pre-translocational (PRE) to the post-translocational (POST) state as the newly formed A-site-bound peptidyl-tRNA and P-site-bound deacylated tRNA move to the P and E sites, respectively. Catalyzes the coordinated movement of the two tRNA molecules, the mRNA and conformational changes in the ribosome. The chain is Elongation factor G from Anoxybacillus flavithermus (strain DSM 21510 / WK1).